The sequence spans 762 residues: 5-methyltetrahydropteroyltriglutamate--homocysteine methyltransferase (762 aa).

5-methyltetrahydropteroyltri-L-glutamate is bound by residues arginine 18–lysine 21 and lysine 112. L-homocysteine is bound by residues isoleucine 435–serine 437 and glutamate 488. L-methionine contacts are provided by residues isoleucine 435–serine 437 and glutamate 488. Residues arginine 519–cysteine 520 and tryptophan 565 each bind 5-methyltetrahydropteroyltri-L-glutamate. Aspartate 603 contacts L-homocysteine. Aspartate 603 provides a ligand contact to L-methionine. Glutamate 609 contributes to the 5-methyltetrahydropteroyltri-L-glutamate binding site. 3 residues coordinate Zn(2+): histidine 645, cysteine 647, and glutamate 669. The active-site Proton donor is histidine 698. Cysteine 719 bears the S-bacillithiol cysteine disulfide mark. Cysteine 730 contributes to the Zn(2+) binding site.

It belongs to the vitamin-B12 independent methionine synthase family. Zn(2+) is required as a cofactor. Post-translationally, in response to oxidative stress, Cys-719 can react with bacillithiol (BSH) to form mixed disulfides. S-bacillithiolation leads to loss of catalytic activity and methionine auxotrophy.

The catalysed reaction is 5-methyltetrahydropteroyltri-L-glutamate + L-homocysteine = tetrahydropteroyltri-L-glutamate + L-methionine. The protein operates within amino-acid biosynthesis; L-methionine biosynthesis via de novo pathway; L-methionine from L-homocysteine (MetE route): step 1/1. Catalyzes the transfer of a methyl group from 5-methyltetrahydrofolate to homocysteine resulting in methionine formation. This is 5-methyltetrahydropteroyltriglutamate--homocysteine methyltransferase from Bacillus subtilis (strain 168).